Reading from the N-terminus, the 258-residue chain is TLC domain-containing protein 4-A (258 aa).

6 helical membrane-spanning segments follow: residues 5 to 25 (LISY…FSAI), 52 to 72 (FVST…LAYD), 85 to 105 (FWVK…LLLL), 116 to 132 (YMVC…GYVL), 171 to 191 (PVLL…IAVI), and 212 to 232 (IGPQ…NVFW). The region spanning 43 to 245 (GKQCEWDSRF…IARGFYKVVK (203 aa)) is the TLC domain.

It belongs to the TLCD4 family.

It is found in the membrane. The chain is TLC domain-containing protein 4-A (tlcd4-a) from Xenopus laevis (African clawed frog).